Here is a 360-residue protein sequence, read N- to C-terminus: Peptide chain release factor 1 (360 aa).

N5-methylglutamine is present on Q236.

The protein belongs to the prokaryotic/mitochondrial release factor family. Methylated by PrmC. Methylation increases the termination efficiency of RF1.

The protein localises to the cytoplasm. Peptide chain release factor 1 directs the termination of translation in response to the peptide chain termination codons UAG and UAA. This Limosilactobacillus reuteri subsp. reuteri (strain JCM 1112) (Lactobacillus reuteri) protein is Peptide chain release factor 1.